Here is a 655-residue protein sequence, read N- to C-terminus: Ribonuclease 3 (655 aa).

Disordered regions lie at residues 1–148 (MENL…NSEK) and 171–376 (LIAP…NIPL). Positions 1 to 400 (MENLEKNTKK…NYIKDNYPVI (400 aa)) are unknown. The segment covering 8–20 (TKKKIKKPNNFKK) has biased composition (basic residues). Composition is skewed to basic and acidic residues over residues 21–34 (NNKDKTEELKDKPT) and 69–89 (DYEKKIREIQAKEAKKIRSDE). Residues 92–102 (NNNSKKQNNNK) show a composition bias toward low complexity. Over residues 103–115 (QAKKKANKNKKQK) the composition is skewed to basic residues. Positions 135 to 148 (AANNQVKAIPNSEK) are enriched in polar residues. The span at 206–223 (NNFVNNQKNHNKNNAGNK) shows a compositional bias: low complexity. Composition is skewed to polar residues over residues 229–242 (PTKPLNQSKLSKST) and 250–259 (PNFTSNQPKP). 2 stretches are compositionally biased toward basic and acidic residues: residues 260–274 (TQKEDSKKVKAKKAE) and 298–309 (DQTKKKQPKENK). Residues 310-332 (NQQIKAVNLNNNQQKTNNNNQKN) show a composition bias toward low complexity. Basic and acidic residues predominate over residues 333–350 (SVDKSENDNNKKKSEANQ). Over residues 351-360 (KQENLNPNNN) the composition is skewed to low complexity. Residues 401–655 (YADLKEKNRL…KFRGLLKLEK (255 aa)) form an RNase 3 region. Residues 432–556 (LELLLKKFKV…FIGAMYLDQG (125 aa)) enclose the RNase III domain. Residue Glu-472 coordinates Mg(2+). Residue Asp-476 is part of the active site. The Mg(2+) site is built by Asp-542 and Glu-545. Glu-545 is a catalytic residue. The 68-residue stretch at 582-649 (DYKSIFQEII…AKEAISKFRG (68 aa)) folds into the DRBM domain.

The protein belongs to the ribonuclease III family. As to quaternary structure, homodimer. Mg(2+) serves as cofactor.

The protein resides in the cytoplasm. The catalysed reaction is Endonucleolytic cleavage to 5'-phosphomonoester.. Its function is as follows. Digests double-stranded RNA. Involved in the processing of primary rRNA transcript to yield the immediate precursors to the large and small rRNAs (23S and 16S). Processes some mRNAs, and tRNAs when they are encoded in the rRNA operon. Processes pre-crRNA and tracrRNA of type II CRISPR loci if present in the organism. The sequence is that of Ribonuclease 3 (rnc) from Mycoplasmoides gallisepticum (strain R(low / passage 15 / clone 2)) (Mycoplasma gallisepticum).